Consider the following 84-residue polypeptide: ATP synthase subunit c (84 aa).

The next 2 helical transmembrane spans lie at Ile9–Ile29 and Ile54–Ile74.

The protein belongs to the ATPase C chain family. F-type ATPases have 2 components, F(1) - the catalytic core - and F(0) - the membrane proton channel. F(1) has five subunits: alpha(3), beta(3), gamma(1), delta(1), epsilon(1). F(0) has three main subunits: a(1), b(2) and c(10-14). The alpha and beta chains form an alternating ring which encloses part of the gamma chain. F(1) is attached to F(0) by a central stalk formed by the gamma and epsilon chains, while a peripheral stalk is formed by the delta and b chains.

Its subcellular location is the cell inner membrane. F(1)F(0) ATP synthase produces ATP from ADP in the presence of a proton or sodium gradient. F-type ATPases consist of two structural domains, F(1) containing the extramembraneous catalytic core and F(0) containing the membrane proton channel, linked together by a central stalk and a peripheral stalk. During catalysis, ATP synthesis in the catalytic domain of F(1) is coupled via a rotary mechanism of the central stalk subunits to proton translocation. In terms of biological role, key component of the F(0) channel; it plays a direct role in translocation across the membrane. A homomeric c-ring of between 10-14 subunits forms the central stalk rotor element with the F(1) delta and epsilon subunits. In Pasteurella multocida (strain Pm70), this protein is ATP synthase subunit c.